The primary structure comprises 748 residues: Putative transmembrane protein ORF88 (748 aa).

Residues 1–20 form the signal peptide; it reads MIIMKSIILLLAWFLTKTQA. Residues 21–723 lie on the Extracellular side of the membrane; the sequence is NMLTESLYLS…LNLAPFKTLS (703 aa). 8 N-linked (GlcNAc...) asparagine; by host glycosylation sites follow: Asn55, Asn78, Asn99, Asn152, Asn189, Asn390, Asn467, and Asn499. Positions 531–574 are disordered; sequence LTFDSPPPPPTTTQAPPPPPTTTQAPPPPPTTTQAPPPPIVINT. The segment covering 535–570 has biased composition (pro residues); that stretch reads SPPPPPTTTQAPPPPPTTTQAPPPPPTTTQAPPPPI. N-linked (GlcNAc...) asparagine; by host glycosylation is found at Asn573, Asn584, Asn599, Asn612, and Asn617. A disordered region spans residues 650-680; the sequence is PSIGRAPIPPPDVPVEPPRSIPTTNAPSPEE. A compositionally biased stretch (pro residues) spans 656–669; sequence PIPPPDVPVEPPRS. The chain crosses the membrane as a helical span at residues 724-744; that stretch reads YAGIGVVSFALLFTILVVCLI. Residues 745 to 748 are Cytoplasmic-facing; sequence KFSI.

The protein resides in the host membrane. The protein is Putative transmembrane protein ORF88 of Magallana gigas (Pacific oyster).